Consider the following 131-residue polypeptide: Sec-independent protein translocase protein TatB (131 aa).

A helical transmembrane segment spans residues 2 to 22 (LGSLSWEHMLVLVVVGLVVLG). The segment at 96–131 (AFDRPVNGAAAQPPPAPAPPPEPHRSGQTPFDADAT) is disordered. Over residues 107–116 (QPPPAPAPPP) the composition is skewed to pro residues.

The protein belongs to the TatB family. In terms of assembly, the Tat system comprises two distinct complexes: a TatABC complex, containing multiple copies of TatA, TatB and TatC subunits, and a separate TatA complex, containing only TatA subunits. Substrates initially bind to the TatABC complex, which probably triggers association of the separate TatA complex to form the active translocon.

It is found in the cell membrane. Part of the twin-arginine translocation (Tat) system that transports large folded proteins containing a characteristic twin-arginine motif in their signal peptide across membranes. Together with TatC, TatB is part of a receptor directly interacting with Tat signal peptides. TatB may form an oligomeric binding site that transiently accommodates folded Tat precursor proteins before their translocation. This chain is Sec-independent protein translocase protein TatB, found in Mycolicibacterium paratuberculosis (strain ATCC BAA-968 / K-10) (Mycobacterium paratuberculosis).